A 390-amino-acid chain; its full sequence is Flap endonuclease 1-1 (390 aa).

The N-domain stretch occupies residues methionine 1 to lysine 108. Residue aspartate 34 participates in Mg(2+) binding. Arginine 74 lines the DNA pocket. Mg(2+) is bound by residues aspartate 90, glutamate 162, glutamate 164, aspartate 183, and aspartate 185. Residues glutamine 126 to phenylalanine 254 are I-domain. Glutamate 162 contacts DNA. DNA is bound by residues glycine 232 and aspartate 234. A Mg(2+)-binding site is contributed by aspartate 234. An interaction with PCNA region spans residues phenylalanine 348–phenylalanine 356. Positions threonine 359 to isoleucine 390 are disordered.

It belongs to the XPG/RAD2 endonuclease family. FEN1 subfamily. Interacts with PCNA. Three molecules of FEN1 bind to one PCNA trimer with each molecule binding to one PCNA monomer. PCNA stimulates the nuclease activity without altering cleavage specificity. Requires Mg(2+) as cofactor. Post-translationally, phosphorylated. Phosphorylation upon DNA damage induces relocalization to the nuclear plasma.

It is found in the nucleus. The protein localises to the nucleolus. Its subcellular location is the nucleoplasm. It localises to the mitochondrion. In terms of biological role, structure-specific nuclease with 5'-flap endonuclease and 5'-3' exonuclease activities involved in DNA replication and repair. During DNA replication, cleaves the 5'-overhanging flap structure that is generated by displacement synthesis when DNA polymerase encounters the 5'-end of a downstream Okazaki fragment. It enters the flap from the 5'-end and then tracks to cleave the flap base, leaving a nick for ligation. Also involved in the long patch base excision repair (LP-BER) pathway, by cleaving within the apurinic/apyrimidinic (AP) site-terminated flap. Acts as a genome stabilization factor that prevents flaps from equilibrating into structures that lead to duplications and deletions. Also possesses 5'-3' exonuclease activity on nicked or gapped double-stranded DNA, and exhibits RNase H activity. Also involved in replication and repair of rDNA and in repairing mitochondrial DNA. The polypeptide is Flap endonuclease 1-1 (Paramecium tetraurelia).